Consider the following 1099-residue polypeptide: Adenylate-forming reductase Nps11 (1099 aa).

An adenylation (A) domain region spans residues 29 to 360 (AEHNSNVPFF…GTECGGLNSM (332 aa)). AMP-binding positions include H244, 347–348 (NV), T352, and 432–435 (LVGR). A Carrier domain is found at 578-664 (WSEESLVVWL…RLSQALARVV (87 aa)). S613 carries the post-translational modification O-(pantetheine 4'-phosphoryl)serine. Residues 717-952 (LTGSTGGLGS…VVSWLPPHAV (236 aa)) form a reductase (R) domain region. NADP(+) is bound by residues 721–724 (TGGL), 809–811 (NAW), Y883, and K887.

The protein belongs to the adenylate-forming reductase family.

Adenylate-forming reductase, a natural product biosynthesis enzyme that resembles non-ribosomal peptide synthetases, yet serves to modify one substrate, rather than to condense two or more building blocks. The A-domain preferentially accepts benzoic acid as substrate. The natural product of the enzyme is not yet known. The polypeptide is Adenylate-forming reductase Nps11 (Serpula lacrymans var. lacrymans (strain S7.9) (Dry rot fungus)).